Here is a 268-residue protein sequence, read N- to C-terminus: TodF product hydratase (268 aa).

Belongs to the hydratase/decarboxylase family.

It participates in xenobiotic degradation; toluene degradation. Functionally, converts the product of 2-hydroxy-6-oxo-2,4-heptadienoate hydrolase. This chain is TodF product hydratase (todJ), found in Pseudomonas putida (strain ATCC 700007 / DSM 6899 / JCM 31910 / BCRC 17059 / LMG 24140 / F1).